A 119-amino-acid polypeptide reads, in one-letter code: Beta-2-microglobulin (119 aa).

The first 20 residues, 1–20 (MAPFVAIALLVLLSLSGLEA), serve as a signal peptide directing secretion. The region spanning 25 to 114 (PKIQVYSRHP…VTFSTPKTVK (90 aa)) is the Ig-like C1-type domain. Cysteine 45 and cysteine 100 are oxidised to a cystine.

The protein belongs to the beta-2-microglobulin family. As to quaternary structure, heterodimer of an alpha chain and a beta chain. Beta-2-microglobulin is the beta-chain of major histocompatibility complex class I molecules.

Its subcellular location is the secreted. Its function is as follows. Component of the class I major histocompatibility complex (MHC). Involved in the presentation of peptide antigens to the immune system. The chain is Beta-2-microglobulin (B2M) from Cheracebus torquatus (Collared titi monkey).